A 1116-amino-acid polypeptide reads, in one-letter code: Electrogenic sodium bicarbonate cotransporter 4 (1116 aa).

Basic and acidic residues predominate over residues 1-14; it reads MKVDEEKAGVKKLD. Disordered regions lie at residues 1 to 92, 222 to 257, and 431 to 467; these read MKVD…TRSP, PIHRSLADIGKSVSTTNRSSARSSSAGPTLHRSTED, and PGQMNGSVGGGGASAGGGGSGGGAGGSGAGGVGSGDE. Over 1–515 the chain is Cytoplasmic; it reads MKVDEEKAGV…YDGFHLQSIS (515 aa). Positions 233 to 247 are enriched in low complexity; the sequence is SVSTTNRSSARSSSA. The segment covering 437 to 464 has biased composition (gly residues); the sequence is SVGGGGASAGGGGSGGGAGGSGAGGVGS. Residues 516-536 traverse the membrane as a helical segment; it reads AVLFIYLGCITNAITFGGLLG. Over 537–558 the chain is Extracellular; that stretch reads DATDNYQGVMESFLGTAMAGSL. A helical transmembrane segment spans residues 559 to 579; it reads FCLFSGQPLIILSSTGPILIF. The Cytoplasmic portion of the chain corresponds to 580 to 600; it reads EKLLFDFSKANGLDYMEFRLW. The chain crosses the membrane as a helical span at residues 601–621; it reads IGLHSAIQCLILVATDASFII. Residues 622–631 lie on the Extracellular side of the membrane; the sequence is KYITRFTEEG. Residues 632-652 traverse the membrane as a helical segment; it reads FSTLISFIFIYDAIKKMIGAF. The Cytoplasmic portion of the chain corresponds to 653–730; it reads KYYPINTDFK…GGRLLGSSCQ (78 aa). The chain crosses the membrane as a helical span at residues 731–751; it reads FVPDLALMSFILFFGTYSMTL. The Extracellular segment spans residues 752–768; sequence TLKKFKFSRYFPTKVRT. The helical transmembrane segment at 769-789 threads the bilayer; sequence LVADFSIVFSILLFCGIDACF. Topologically, residues 790–819 are cytoplasmic; it reads GLQTPKLHVPSVIKPTRPDRGWFVAPFGKN. The helical transmembrane segment at 820–840 threads the bilayer; sequence PWWVYPASILPALLVTILIFM. Over 841 to 865 the chain is Extracellular; the sequence is DQQITAVIVNRKENKLRKAAGYHLD. A helical membrane pass occupies residues 866 to 886; the sequence is LFWVGILMALCSFTGLPWYVA. At 887–922 the chain is on the cytoplasmic side; it reads ATVISIAHIDSLKMETETSAPGEQPQFLGVREQRVT. A helical transmembrane segment spans residues 923-943; that stretch reads GVMVFILTGISVFLAPILKYI. Residues 944–945 are Extracellular-facing; that stretch reads PM. Residues 946 to 966 traverse the membrane as a helical segment; it reads PVLYGVFLYMGVASLNGIQFW. Topologically, residues 967–987 are cytoplasmic; the sequence is ERCKLFLMPAKHQPDHAFLRH. The next 2 membrane-spanning stretches (helical) occupy residues 988–1008 and 1009–1029; these read VPLRRIHLFTLVQILCLALLW and ILKSTMAAIIFPVMILGLIIV. Topologically, residues 1030–1116 are cytoplasmic; the sequence is RRLLDLIFSQ…KRSSSWSYSL (87 aa).

Belongs to the anion exchanger (TC 2.A.31) family.

It localises to the apical cell membrane. The protein localises to the basolateral cell membrane. The catalysed reaction is 2 hydrogencarbonate(out) + Na(+)(out) = 2 hydrogencarbonate(in) + Na(+)(in). It carries out the reaction 3 hydrogencarbonate(out) + Na(+)(out) = 3 hydrogencarbonate(in) + Na(+)(in). In terms of biological role, mediates sodium- and bicarbonate-dependent electrogenic sodium bicarbonate cotransport, with a Na(+):HCO3(-) stoichiometry varying from 1:2 to 1:3. This Mus musculus (Mouse) protein is Electrogenic sodium bicarbonate cotransporter 4 (Slc4a5).